A 339-amino-acid chain; its full sequence is Cathepsin B (339 aa).

The first 17 residues, 1 to 17 (MWQLWASLCCLLVLANA), serve as a signal peptide directing secretion. Residues 18-79 (RSRPSFHPLS…QRVMFTEDLK (62 aa)) constitute a propeptide, activation peptide. Disulfide bonds link cysteine 93–cysteine 122, cysteine 105–cysteine 150, cysteine 141–cysteine 207, cysteine 142–cysteine 146, cysteine 179–cysteine 211, and cysteine 187–cysteine 198. Cysteine 108 is an active-site residue. An N-linked (GlcNAc...) asparagine glycan is attached at asparagine 192. Lysine 220 carries the post-translational modification N6-acetyllysine. Residues histidine 278 and asparagine 298 contribute to the active site. Residues 334–339 (QYWEKI) constitute a propeptide that is removed on maturation.

This sequence belongs to the peptidase C1 family. In terms of assembly, dimer of a heavy chain and a light chain cross-linked by a disulfide bond. Interacts with SRPX2. Directly interacts with SHKBP1. As to expression, expressed in the stratum spinosum of the epidermis. Weak expression is detected in the stratum granulosum.

Its subcellular location is the lysosome. It is found in the melanosome. The protein localises to the secreted. It localises to the extracellular space. The protein resides in the apical cell membrane. It carries out the reaction Hydrolysis of proteins with broad specificity for peptide bonds. Preferentially cleaves -Arg-Arg-|-Xaa bonds in small molecule substrates (thus differing from cathepsin L). In addition to being an endopeptidase, shows peptidyl-dipeptidase activity, liberating C-terminal dipeptides.. Its activity is regulated as follows. Inhibited by leupeptin. Thiol protease which is believed to participate in intracellular degradation and turnover of proteins. Cleaves matrix extracellular phosphoglycoprotein MEPE. Involved in the solubilization of cross-linked TG/thyroglobulin in the thyroid follicle lumen. Has also been implicated in tumor invasion and metastasis. This chain is Cathepsin B (CTSB), found in Homo sapiens (Human).